The following is a 101-amino-acid chain: MPNSTPQSQLIRAHVFVTGRVQGVGFRYSTVDTASQLGLTGWVRNLPDGRVEAVFEGVRDIVEDMVRWCHAGPPAAVVQDVAVEYEEPEGLRGFEVKRLVK.

One can recognise an Acylphosphatase-like domain in the interval 12 to 98; it reads RAHVFVTGRV…EGLRGFEVKR (87 aa). Active-site residues include arginine 27 and asparagine 45.

It belongs to the acylphosphatase family.

It catalyses the reaction an acyl phosphate + H2O = a carboxylate + phosphate + H(+). This is Acylphosphatase (acyP) from Nostoc sp. (strain PCC 7120 / SAG 25.82 / UTEX 2576).